Here is a 511-residue protein sequence, read N- to C-terminus: GMP synthase [glutamine-hydrolyzing] (511 aa).

The Glutamine amidotransferase type-1 domain occupies 5-195 (DILVLDFGSQ…AKYACNCESV (191 aa)). Cysteine 82 serves as the catalytic Nucleophile. Active-site residues include histidine 169 and glutamate 171. In terms of domain architecture, GMPS ATP-PPase spans 196–386 (WNMGSFAKTQ…LGLSKEVVYR (191 aa)). 223–229 (SGGVDSS) contacts ATP.

As to quaternary structure, homodimer.

The enzyme catalyses XMP + L-glutamine + ATP + H2O = GMP + L-glutamate + AMP + diphosphate + 2 H(+). It functions in the pathway purine metabolism; GMP biosynthesis; GMP from XMP (L-Gln route): step 1/1. In terms of biological role, catalyzes the synthesis of GMP from XMP. This chain is GMP synthase [glutamine-hydrolyzing], found in Campylobacter jejuni (strain RM1221).